The following is a 277-amino-acid chain: MATSSSAFDDELPMEEGMPELLDDEDVPSTLPSLLEQNLDTAPKGDEFKLVKRKRKSGNAIDVVMEDVSQVDEDATADTADDSTGPKSSKRTKGVKGESRVVPVPKHRYTPLKDNWVNIFTPIVKNLGLQVRFNLKKRQVEIRNPVDREDTTDLQKATDFVRAFILGFEVNDAIALIRLDHLFLETFEVADVKHSLKGDHVSRAIGRIAGKDGRTKLVIENTTKTRIVVANTKIHILGAYQNLKLARNAVCSLILGSNPSKVYGSLRNMASRGAERL.

Disordered stretches follow at residues 1-52 (MATS…KLVK) and 72-100 (DEDA…GESR). Acidic residues predominate over residues 8–27 (FDDELPMEEGMPELLDDEDV). A compositionally biased stretch (polar residues) spans 30–40 (TLPSLLEQNLD). The span at 72 to 81 (DEDATADTAD) shows a compositional bias: acidic residues. Residues 198–250 (GDHVSRAIGRIAGKDGRTKLVIENTTKTRIVVANTKIHILGAYQNLKLARNAV) enclose the KH domain.

The protein belongs to the PNO1 family. In terms of assembly, part of the small subunit (SSU) processome, composed of more than 70 proteins and the RNA chaperone small nucleolar RNA (snoRNA) U3.

It is found in the nucleus. Its subcellular location is the nucleolus. Its function is as follows. Part of the small subunit (SSU) processome, first precursor of the small eukaryotic ribosomal subunit. During the assembly of the SSU processome in the nucleolus, many ribosome biogenesis factors, an RNA chaperone and ribosomal proteins associate with the nascent pre-rRNA and work in concert to generate RNA folding, modifications, rearrangements and cleavage as well as targeted degradation of pre-ribosomal RNA by the RNA exosome. Positively regulates dimethylation of two adjacent adenosines in the loop of a conserved hairpin near the 3'-end of 18S rRNA. The sequence is that of RNA-binding protein pno-1 from Caenorhabditis elegans.